Reading from the N-terminus, the 256-residue chain is Undecaprenyl-diphosphatase (256 aa).

8 consecutive transmembrane segments (helical) span residues 1–21, 39–59, 70–90, 97–117, 134–154, 176–196, 205–225, and 235–255; these read MTILDSIILGAIEGFTEFLPI, NAINKAYEVIIQFSAILAVIF, IDLWMKVFIAFLPLAIIGFIF, LFSLHVVAVMFIVGGVVFLIV, AISLKQSLIIGFAQIFALIPG, AEFSFLLAFPVMGAVTAYDLL, ANLIILGVGFVTSFVVAYLSI, and FTFFFFGVYRIVFGVILLLFF.

This sequence belongs to the UppP family.

The protein resides in the cell inner membrane. It carries out the reaction di-trans,octa-cis-undecaprenyl diphosphate + H2O = di-trans,octa-cis-undecaprenyl phosphate + phosphate + H(+). Catalyzes the dephosphorylation of undecaprenyl diphosphate (UPP). Confers resistance to bacitracin. This is Undecaprenyl-diphosphatase from Sulfurimonas denitrificans (strain ATCC 33889 / DSM 1251) (Thiomicrospira denitrificans (strain ATCC 33889 / DSM 1251)).